We begin with the raw amino-acid sequence, 482 residues long: QWRF motif-containing protein 3 (482 aa).

Over residues 1 to 20 the composition is skewed to basic and acidic residues; it reads MKSCEHELLKTRRGKSREVS. Disordered regions lie at residues 1 to 60 and 171 to 220; these read MKSC…GLKK and TAKP…QWAL. Low complexity predominate over residues 21 to 42; that stretch reads SRFLSSPSASSSPNRRNSTSNS. Residues 191-219 are compositionally biased toward polar residues; that stretch reads RTNSSKGIENRLQRNNSVSRYGSSMSQWA. The QWRF motif motif lies at 292–295; the sequence is QWRF.

Belongs to the QWRF family.

In Arabidopsis thaliana (Mouse-ear cress), this protein is QWRF motif-containing protein 3 (QWRF3).